We begin with the raw amino-acid sequence, 742 residues long: Dynein axonemal intermediate chain 4 (742 aa).

WD repeat units follow at residues 462 to 502 (HCEC…DFPV), 511 to 559 (KHTS…DCND), 631 to 671 (GHKG…PILT), and 674 to 713 (NTTN…IDPV).

Part of the multisubunit axonemal dynein complex formed at least of two heavy chains and a number of intermediate and light chains. Associated with axonemal dynein subunits such as, DNAH2, DNAI3, and DYNLT1.

It localises to the cytoplasm. The protein localises to the cytoskeleton. Its subcellular location is the flagellum axoneme. It is found in the cilium axoneme. The protein resides in the dynein axonemal particle. Functionally, plays a critical role in the assembly of axonemal dynein complex, thereby playing a role in ciliary motility. The chain is Dynein axonemal intermediate chain 4 from Xenopus laevis (African clawed frog).